A 279-amino-acid chain; its full sequence is Methyltransferase ausD (279 aa).

Residues 124–125 (DL), 152–153 (DI), and Arg-244 each bind S-adenosyl-L-methionine.

The protein belongs to the class I-like SAM-binding methyltransferase superfamily. As to quaternary structure, homodimer.

It participates in secondary metabolite biosynthesis; terpenoid biosynthesis. Its function is as follows. Methyltransferase; part of the gene cluster that mediates the biosynthesis of calidodehydroaustin, a fungal meroterpenoid. The first step of the pathway is the synthesis of 3,5-dimethylorsellinic acid by the polyketide synthase ausA. 3,5-dimethylorsellinic acid is then prenylated by the polyprenyl transferase ausN. Further epoxidation by the FAD-dependent monooxygenase ausM and cyclization by the probable terpene cyclase ausL lead to the formation of protoaustinoid A. Protoaustinoid A is then oxidized to spiro-lactone preaustinoid A3 by the combined action of the FAD-binding monooxygenases ausB and ausC, and the dioxygenase ausE. Acid-catalyzed keto-rearrangement and ring contraction of the tetraketide portion of preaustinoid A3 by ausJ lead to the formation of preaustinoid A4. The aldo-keto reductase ausK, with the help of ausH, is involved in the next step by transforming preaustinoid A4 into isoaustinone which is in turn hydroxylated by the P450 monooxygenase ausI to form austinolide. The cytochrome P450 monooxygenase ausG modifies austinolide to austinol. Austinol is further acetylated to austin by the O-acetyltransferase ausP, which spontaneously changes to dehydroaustin. The cytochrome P450 monooxygenase ausR then converts dehydroaustin is into 7-dehydrodehydroaustin. The hydroxylation catalyzed by ausR permits the O-acetyltransferase ausQ to add an additional acetyl group to the molecule, leading to the formation of acetoxydehydroaustin. The short chain dehydrogenase ausT catalyzes the reduction of the double bond present between carbon atoms 1 and 2 to convert 7-dehydrodehydroaustin into 1,2-dihydro-7-hydroxydehydroaustin. AusQ catalyzes not only an acetylation reaction but also the addition of the PKS ausV diketide product to 1,2-dihydro-7-hydroxydehydroaustin, forming precalidodehydroaustin. Finally, the iron/alpha-ketoglutarate-dependent dioxygenase converts precalidodehydroaustin into calidodehydroaustin. The protein is Methyltransferase ausD of Aspergillus calidoustus.